The chain runs to 86 residues: Neurotoxin 3FTx-RK (86 aa).

A signal peptide spans 1–21 (MKTLLLTLVVVTIVCLELGYT). 4 disulfides stabilise this stretch: C24-C45, C38-C63, C67-C78, and C79-C84.

Expressed by the venom gland.

Its subcellular location is the secreted. This is Neurotoxin 3FTx-RK from Bungarus fasciatus (Banded krait).